We begin with the raw amino-acid sequence, 312 residues long: Methionyl-tRNA formyltransferase (312 aa).

117–120 (SLLP) contacts (6S)-5,6,7,8-tetrahydrofolate.

This sequence belongs to the Fmt family.

The catalysed reaction is L-methionyl-tRNA(fMet) + (6R)-10-formyltetrahydrofolate = N-formyl-L-methionyl-tRNA(fMet) + (6S)-5,6,7,8-tetrahydrofolate + H(+). Functionally, attaches a formyl group to the free amino group of methionyl-tRNA(fMet). The formyl group appears to play a dual role in the initiator identity of N-formylmethionyl-tRNA by promoting its recognition by IF2 and preventing the misappropriation of this tRNA by the elongation apparatus. This is Methionyl-tRNA formyltransferase from Bordetella parapertussis (strain 12822 / ATCC BAA-587 / NCTC 13253).